The primary structure comprises 216 residues: Large ribosomal subunit protein uL4 (216 aa).

The disordered stretch occupies residues 47 to 77 (THKVKGMGEVSGTTKKPYRQKGTGNARQGSL).

This sequence belongs to the universal ribosomal protein uL4 family. In terms of assembly, part of the 50S ribosomal subunit.

One of the primary rRNA binding proteins, this protein initially binds near the 5'-end of the 23S rRNA. It is important during the early stages of 50S assembly. It makes multiple contacts with different domains of the 23S rRNA in the assembled 50S subunit and ribosome. Its function is as follows. Forms part of the polypeptide exit tunnel. This Acidiphilium cryptum (strain JF-5) protein is Large ribosomal subunit protein uL4.